A 461-amino-acid chain; its full sequence is Hydroxyproline dehydrogenase (461 aa).

The residue at position 310 (Lys310) is an N6-acetyllysine.

It belongs to the proline oxidase family. The cofactor is FAD.

It catalyses the reaction trans-4-hydroxy-L-proline + a quinone = (3R,5S)-1-pyrroline-3-hydroxy-5-carboxylate + a quinol + H(+). The enzyme catalyses L-proline + a quinone = (S)-1-pyrroline-5-carboxylate + a quinol + H(+). The protein operates within amino-acid degradation; L-proline degradation into L-glutamate; L-glutamate from L-proline: step 1/2. Dehydrogenase that converts trans-4-L-hydroxyproline to delta-1-pyrroline-3-hydroxy-5-carboxylate (Hyp) using ubiquinone-10 as the terminal electron acceptor. Can also use proline as a substrate but with a very much lower efficiency. Does not react with other diastereomers of Hyp: trans-4-D-hydroxyproline and cis-4-L-hydroxyproline. Ubiquininone analogs such as menadione, duroquinone and ubiquinone-1 react more efficiently than oxygen as the terminal electron acceptor during catalysis. This Bos taurus (Bovine) protein is Hydroxyproline dehydrogenase.